Here is a 240-residue protein sequence, read N- to C-terminus: 5-oxoprolinase subunit B (240 aa).

194 to 201 (GWQLIGKT) provides a ligand contact to ATP.

It belongs to the PxpB family. In terms of assembly, forms a complex composed of PxpA, PxpB and PxpC. Interacts with PxpC (KipA). Interaction with PxpC prevents the inhibitory action of PxpB (KipI). Interacts with KinA. Two PxpB monomers bind via their C-domains at a conserved proline in the KinA dimerization and histidine-phosphotransfer (DHp) domain.

The catalysed reaction is 5-oxo-L-proline + ATP + 2 H2O = L-glutamate + ADP + phosphate + H(+). In terms of biological role, catalyzes the cleavage of 5-oxoproline to form L-glutamate coupled to the hydrolysis of ATP to ADP and inorganic phosphate. In addition, is a potent inhibitor of the autophosphorylation reaction of kinase A (kinA) and its reverse reaction, but does not inhibit phosphate transfer to the Spo0F response regulator once kinase A is phosphorylated. Is an inhibitor of the catalytic domain of kinase A affecting the ATP/ADP reactions and not the phosphotransferase functions of this domain. The inhibition is non-competitive with respect to ATP. The protein is 5-oxoprolinase subunit B of Bacillus subtilis (strain 168).